The following is a 1162-amino-acid chain: MKFGKTYVTHQIPEWSIYYMNYKQLKKIIKSIDSAANTNVDESKYPEVISDTLGSFFYDLDRDIEKVDSFYNTKFKEYNRRLNKIFQVLGYQDGQITHNIESSEELDEIINILIELKSLFRNLKWFAELNHKGFIKILKKLDKKLTSILSQHSGVSVGGVSNHNQEAYMGSRINALPFANGTEASNCLDSIHHILSRIETRNDVVQETIPVENNETSISALIKNDDFEGLKKHITIKSSQKFLISTLNKAALANSTKCIDVIWNQLDMLYDDSDFNGRNFFHQHIISLGKAQFIREEQIVPGEVTNRLIGGDNGPDNSNKNDNPIGLLYILNKLKHKRLILAEDHYHRTPLHYASQYGLVEVTRYLVEFGVKWGLINTSISIDDVSIWGDQEGLTPLHLSIIGKHPKTTETLLGFNKAQTLTCPNLLLLAVRLNSPQILNSLIVEGNIDVNYTDIDHRNETALYIASKLNHPDLVEFLLESNANTEIGENVFGWTPIFIAASEGFMTIVKLLKEYGASYDIVDDSGWLPMEHACLRGHLDVTDLLLPKNEKLLLYDMYHPENNLPRIPSLAASPVLTGSDDGTVSTSSIDKLPEPQKNTVNQFYKQLKNNSSNNVSRSTSPKRNKRYKPVKSFGHRYLNEDESLILLTLGTTDLRDTNVPVELNKVSLAKSFATELDTALSLSITCRHKLTNNPVEPPVVVDLPLEDFHGSATDPISFKLSNDLTVNDVIITFDIIPTYQVNKKVIGRAIALLKDAYTKVGPNLRSLNNSIAIPIIESTNLDILGTIRFEYLQVLPFKHKAMSIARSDTYWKQLVSTRVIGHRGLGKNLSGKKSLQLGENTVESFIAAASLGASYVEFDVQLTKDHVPVVYHDFTVAESGVDIPMHLLTLEQFMGFNTPTEKPTHTVDDEVLTRGKQRAQSSYQLSNNHNDDIEKEFANQRDERMKFTKTWKNQGYKGNLRGSSVASNFVTLRELFRKLPNNVGFNIEVKYPMLDEAQLEDMGEIGVDLNFFVDTILKVIYDENTTGRDIVFSSFHPDICLLLSLKQPTMPVLFLTEAGTAPMYDIRASSLQNAVRFSKKWNLLGIVSNALALIKTPRLAQVVKSMGLVCVTYGTENNEPELAKIQMRAGVDAVIVDSVLAVREGLREHNETMNEFEDSPTE.

Residues 1–155 (MKFGKTYVTH…TSILSQHSGV (155 aa)) enclose the SPX domain. ANK repeat units lie at residues 346 to 375 (YHRT…KWGL), 392 to 421 (EGLT…AQTL), 423 to 452 (CPNL…DVNY), 458 to 487 (RNET…NTEI), 492 to 521 (FGWT…SYDI), and 525 to 554 (SGWL…KLLL). The region spanning 817 to 1146 (TRVIGHRGLG…DSVLAVREGL (330 aa)) is the GP-PDE domain.

Belongs to the GDE1 family.

Its subcellular location is the cytoplasm. The enzyme catalyses sn-glycerol 3-phosphocholine + H2O = sn-glycerol 3-phosphate + choline + H(+). Its function is as follows. Glycerophosphocholine glycerophosphodiesterase responsible for the hydrolysis of intracellular glycerophosphocholine into glycerol-phosphate and choline. The choline is used for phosphatidyl-choline synthesis. Required for utilization of glycerophosphocholine as phosphate source. C.albicans can utilize GroPCho through transport and intracellular hydrolysis or through extracellular hydrolysis. In Candida albicans (strain SC5314 / ATCC MYA-2876) (Yeast), this protein is Glycerophosphocholine phosphodiesterase GDE1.